A 42-amino-acid polypeptide reads, in one-letter code: uncharacterized protein (42 aa).

Positions 20–42 (RSGRAERGVRAHSPAWSERPTPN) are disordered.

This is an uncharacterized protein from Escherichia coli.